A 221-amino-acid chain; its full sequence is MEDEPGSENEADTIVASPLAKWRIEFSKSFQNYLDRSAPNIVRRWLVTLVAAVIYIYRVYSVYGYFVISYGLATYILNLLIGFLSPKVDPELEALDPDSLPVDESDEYKPFVRRLPEFKFWYAATKAFVVAFVMTFFSFLDVPVFWPILLCYWLVLYSLTMKRLIVHMFKYRYFPFDVRKPVKLLKFLVNSVLTFLRLKKGDGGDDRPSSSNSSQGNEKQD.

4 helical membrane passes run 41 to 58 (IVRRWLVTLVAAVIYIYR), 64 to 84 (GYFVISYGLATYILNLLIGFL), 128 to 148 (FVVAFVMTFFSFLDVPVFWPI), and 149 to 169 (LLCYWLVLYSLTMKRLIVHMF). The segment at 200-221 (KGDGGDDRPSSSNSSQGNEKQD) is disordered. A compositionally biased stretch (polar residues) spans 209-221 (SSSNSSQGNEKQD).

This sequence belongs to the RER1 family.

It localises to the membrane. Its function is as follows. Involved in the retrieval of endoplasmic reticulum membrane proteins from the early Golgi compartment. The polypeptide is Protein RER1D (Arabidopsis thaliana (Mouse-ear cress)).